We begin with the raw amino-acid sequence, 386 residues long: Formate-dependent phosphoribosylglycinamide formyltransferase (386 aa).

Residues 10-11 (EL) and E70 each bind N(1)-(5-phospho-beta-D-ribosyl)glycinamide. ATP contacts are provided by residues R102, K143, 148-153 (SSGKGQ), 183-186 (EAFV), and E191. Positions 107 to 298 (DLAAKELGLK…EFELHLRAIL (192 aa)) constitute an ATP-grasp domain. Positions 256 and 268 each coordinate Mg(2+). N(1)-(5-phospho-beta-D-ribosyl)glycinamide is bound by residues D275, K346, and 353-354 (RR).

It belongs to the PurK/PurT family. As to quaternary structure, homodimer.

The catalysed reaction is N(1)-(5-phospho-beta-D-ribosyl)glycinamide + formate + ATP = N(2)-formyl-N(1)-(5-phospho-beta-D-ribosyl)glycinamide + ADP + phosphate + H(+). Its pathway is purine metabolism; IMP biosynthesis via de novo pathway; N(2)-formyl-N(1)-(5-phospho-D-ribosyl)glycinamide from N(1)-(5-phospho-D-ribosyl)glycinamide (formate route): step 1/1. Involved in the de novo purine biosynthesis. Catalyzes the transfer of formate to 5-phospho-ribosyl-glycinamide (GAR), producing 5-phospho-ribosyl-N-formylglycinamide (FGAR). Formate is provided by PurU via hydrolysis of 10-formyl-tetrahydrofolate. The chain is Formate-dependent phosphoribosylglycinamide formyltransferase from Flavobacterium psychrophilum (strain ATCC 49511 / DSM 21280 / CIP 103535 / JIP02/86).